The chain runs to 332 residues: Aerobic cobaltochelatase subunit CobS (332 aa).

In terms of assembly, heterotrimer of CobN, CobS and CobT.

The protein localises to the cytoplasm. The enzyme catalyses hydrogenobyrinate a,c-diamide + Co(2+) + ATP + H2O = cob(II)yrinate a,c diamide + ADP + phosphate + 5 H(+). Its pathway is cofactor biosynthesis; adenosylcobalamin biosynthesis; cob(II)yrinate a,c-diamide from precorrin-2 (aerobic route): step 10/10. In terms of biological role, catalyzes cobalt insertion in the corrin ring. This Sinorhizobium sp protein is Aerobic cobaltochelatase subunit CobS (cobS).